The following is a 372-amino-acid chain: Histidinol-phosphate aminotransferase (372 aa).

At Lys229 the chain carries N6-(pyridoxal phosphate)lysine.

Belongs to the class-II pyridoxal-phosphate-dependent aminotransferase family. Histidinol-phosphate aminotransferase subfamily. As to quaternary structure, homodimer. The cofactor is pyridoxal 5'-phosphate.

The enzyme catalyses L-histidinol phosphate + 2-oxoglutarate = 3-(imidazol-4-yl)-2-oxopropyl phosphate + L-glutamate. The protein operates within amino-acid biosynthesis; L-histidine biosynthesis; L-histidine from 5-phospho-alpha-D-ribose 1-diphosphate: step 7/9. The sequence is that of Histidinol-phosphate aminotransferase from Bdellovibrio bacteriovorus (strain ATCC 15356 / DSM 50701 / NCIMB 9529 / HD100).